The primary structure comprises 713 residues: P-loop NTPase domain-containing protein LPA1 homolog (713 aa).

Disordered stretches follow at residues 218–249 (AKKR…PIGK), 504–575 (TSQA…EDLS), and 650–713 (LDSP…APDK). Residues 231-246 (DFDKTRPLNDKPDGKP) are compositionally biased toward basic and acidic residues. Polar residues predominate over residues 504–531 (TSQAGSVNESWDNANEGTGSHVPSSSGS). Residues 533–544 (KKLDGHCKEIKE) are compositionally biased toward basic and acidic residues. Residues 551–562 (SDDDEEEEEEAA) show a composition bias toward acidic residues. Residues 656-668 (ARSSSALPISASS) are compositionally biased toward low complexity.

Functionally, required for the accumulation of phytic acid in seeds. Phytic acid is the primary storage form of phosphorus in cereal grains and other plant seeds. The sequence is that of P-loop NTPase domain-containing protein LPA1 homolog from Oryza sativa subsp. japonica (Rice).